The chain runs to 251 residues: Gamma-gliadin (251 aa).

An N-terminal signal peptide occupies residues 1-19 (MKTLLILTILAMAITIGTA). The tract at residues 26 to 143 (SSQVQWPQQQ…QQSFPQQQPP (118 aa)) is disordered. A compositionally biased stretch (low complexity) spans 42–81 (QPFSQQPQQTFPQPQQTFPHQPQQQFPQPQQPQQQFLQPQ). Over residues 82-99 (QPFPQQPQQPYPQQPQQP) the composition is skewed to pro residues. Residues 100 to 139 (FPQTQQPQQLFPQSQQPQQQFSQPQQQFPQPQQPQQSFPQ) are compositionally biased toward low complexity.

It belongs to the gliadin/glutenin family.

Gliadin is the major seed storage protein in wheat. In Triticum aestivum (Wheat), this protein is Gamma-gliadin.